The following is a 4639-amino-acid chain: Dynein heavy chain, cytoplasmic (4639 aa).

Positions 1-1856 (MGDSLENPDT…TIHMANARFF (1856 aa)) are stem. 3 coiled-coil regions span residues 530–565 (LDIT…LRDQ), 774–794 (SLIE…DRAS), and 1264–1368 (DDAL…ARLR). 4 AAA regions span residues 1857 to 2084 (YGFE…VLIS), 2166 to 2437 (EEIR…FTRL), 2541 to 2790 (EVET…WVRG), and 2884 to 3153 (VFYE…GGRT). Residues 1895 to 1902 (GPAGTGKT), 2210 to 2217 (GPSGSGKS), 2580 to 2587 (GPPGSGKT), and 2922 to 2929 (GVSGAGKT) contribute to the ATP site. Coiled-coil stretches lie at residues 3189-3261 (GLNK…EKRK), 3382-3478 (AIAQ…WEST), and 3723-3782 (EFRL…EIET). The tract at residues 3189–3478 (GLNKIAETVE…NIERERWEST (290 aa)) is stalk. AAA stretches follow at residues 3539 to 3768 (LSNP…DINQ) and 3989 to 4205 (AHNV…TLDT).

Belongs to the dynein heavy chain family. In terms of assembly, consists of at least two heavy chains and a number of intermediate and light chains.

The protein resides in the cytoplasm. Its subcellular location is the cytoskeleton. Cytoplasmic dynein acts as a motor for the intracellular retrograde motility of vesicles and organelles along microtubules. Dynein has ATPase activity; the force-producing power stroke is thought to occur on release of ADP. This Drosophila melanogaster (Fruit fly) protein is Dynein heavy chain, cytoplasmic (Dhc64C).